Consider the following 326-residue polypeptide: Structural protein ORF326a (326 aa).

The disordered stretch occupies residues 1 to 28; that stretch reads MSTTFRGKKEEEEEEEEEKEEKEEELFN. Residues 11 to 26 show a composition bias toward acidic residues; sequence EEEEEEEEKEEKEEEL.

It localises to the virion. The polypeptide is Structural protein ORF326a (Acidianus two-tailed virus (ATV)).